The primary structure comprises 224 residues: 7-cyano-7-deazaguanine synthase (224 aa).

ATP is bound at residue 10–20; the sequence is LSGGLDSATVV. 4 residues coordinate Zn(2+): Cys-189, Cys-199, Cys-202, and Cys-205.

It belongs to the QueC family. Zn(2+) serves as cofactor.

It carries out the reaction 7-carboxy-7-deazaguanine + NH4(+) + ATP = 7-cyano-7-deazaguanine + ADP + phosphate + H2O + H(+). It participates in purine metabolism; 7-cyano-7-deazaguanine biosynthesis. In terms of biological role, catalyzes the ATP-dependent conversion of 7-carboxy-7-deazaguanine (CDG) to 7-cyano-7-deazaguanine (preQ(0)). The polypeptide is 7-cyano-7-deazaguanine synthase (Pseudomonas aeruginosa (strain LESB58)).